Reading from the N-terminus, the 148-residue chain is Cytochrome c-type biogenesis protein CcmE (148 aa).

At 1–7 (MTRKQRR) the chain is on the cytoplasmic side. The chain crosses the membrane as a helical; Signal-anchor for type II membrane protein span at residues 8–28 (LYFVLLGMAALGGAVALVLTA). The Periplasmic segment spans residues 29–148 (ISDSLVYFYS…QWNDGKQPKQ (120 aa)). 2 residues coordinate heme: H121 and Y125.

This sequence belongs to the CcmE/CycJ family.

It is found in the cell inner membrane. Functionally, heme chaperone required for the biogenesis of c-type cytochromes. Transiently binds heme delivered by CcmC and transfers the heme to apo-cytochromes in a process facilitated by CcmF and CcmH. The polypeptide is Cytochrome c-type biogenesis protein CcmE (Paramagnetospirillum magneticum (strain ATCC 700264 / AMB-1) (Magnetospirillum magneticum)).